We begin with the raw amino-acid sequence, 464 residues long: Argininosuccinate lyase (464 aa).

This sequence belongs to the lyase 1 family. Argininosuccinate lyase subfamily.

The protein localises to the cytoplasm. The enzyme catalyses 2-(N(omega)-L-arginino)succinate = fumarate + L-arginine. It functions in the pathway amino-acid biosynthesis; L-arginine biosynthesis; L-arginine from L-ornithine and carbamoyl phosphate: step 3/3. This is Argininosuccinate lyase from Pseudomonas syringae pv. syringae (strain B728a).